Here is a 211-residue protein sequence, read N- to C-terminus: MLVLGLTGGIGSGKSIVAEMFRTLGAKVVSADDLARMIVQPGSPTLARIARRFGAEVLCEGGALNRAWLAKKIFSDPQARLDLDRITHPAIAELARRRFAALAQASATLVVYDAPLLFEAGADTQVDAVVVVSVAEEVQLQRLMLRDGLDEQAARSRMDSQMPLDEKLARADYVIDNNGSLEQTRDQVVALMARLVPGMKGPDPHASGSAG.

Residues 3–206 (VLGLTGGIGS…PGMKGPDPHA (204 aa)) form the DPCK domain. 11 to 16 (GSGKSI) serves as a coordination point for ATP.

Belongs to the CoaE family.

It localises to the cytoplasm. The enzyme catalyses 3'-dephospho-CoA + ATP = ADP + CoA + H(+). It functions in the pathway cofactor biosynthesis; coenzyme A biosynthesis; CoA from (R)-pantothenate: step 5/5. Its function is as follows. Catalyzes the phosphorylation of the 3'-hydroxyl group of dephosphocoenzyme A to form coenzyme A. The chain is Dephospho-CoA kinase from Syntrophotalea carbinolica (strain DSM 2380 / NBRC 103641 / GraBd1) (Pelobacter carbinolicus).